A 528-amino-acid chain; its full sequence is Negative elongation factor A (528 aa).

The region spanning 89-248 (WVLMVADILK…TPIPPSRTLL (160 aa)) is the HDAg domain. The segment at 125–188 (REKVGECEAS…LQKSTETAQQ (64 aa)) is NELF-C/D-binding. Threonine 157 is subject to Phosphothreonine. Residues 189–248 (LKRSAGVPFHAKGRGLLRKMDTTTPLKGIPKQAPFRSPTAPSVFSPTGNRTPIPPSRTLL) form an RNAPII-binding region. Residues 215–245 (KGIPKQAPFRSPTAPSVFSPTGNRTPIPPSR) form a disordered region. Serine 225 and serine 233 each carry phosphoserine. Residues 227-238 (TAPSVFSPTGNR) show a composition bias toward polar residues. Residue threonine 277 is modified to Phosphothreonine. Positions 320 to 341 (PSTSYLPSTPSVVPASSYIPSS) are enriched in low complexity. The segment at 320–409 (PSTSYLPSTP…PPAVAPTTQT (90 aa)) is disordered. Serine 363 is modified (phosphoserine).

This sequence belongs to the NELF-A family. In terms of assembly, the NELF complex is composed of NELFA, NELFB, NELFCD (isoform NELF-C or isoform NELF-D) and NELFE; NELFA and NELFCD form a stable subcomplex that binds to the N-terminus of NELFB. In vitro, the NELFA:NELFCD subcomplex binds to ssDNA and ssRNA in a sequence- and structure-dependent manner. Interacts with the RNA polymerase II complex when it is not phosphorylated by P-TEFb. Ubiquitous. Expressed in heart, brain, placenta, liver, skeletal muscle, kidney and pancreas. Expressed at lower level in adult lung. Expressed in fetal brain, lung, liver and kidney.

It is found in the nucleus. Functionally, essential component of the NELF complex, a complex that negatively regulates the elongation of transcription by RNA polymerase II. The NELF complex, which acts via an association with the DSIF complex and causes transcriptional pausing, is counteracted by the P-TEFb kinase complex. Its function is as follows. (Microbial infection) The NELF complex is involved in HIV-1 latency possibly involving recruitment of PCF11 to paused RNA polymerase II. In Homo sapiens (Human), this protein is Negative elongation factor A (NELFA).